The sequence spans 193 residues: V-type sodium ATPase subunit E (193 aa).

The protein belongs to the V-ATPase E subunit family. Post-translationally, the N-terminus is blocked.

In terms of biological role, involved in ATP-driven sodium extrusion. In Enterococcus hirae (strain ATCC 9790 / DSM 20160 / JCM 8729 / LMG 6399 / NBRC 3181 / NCIMB 6459 / NCDO 1258 / NCTC 12367 / WDCM 00089 / R), this protein is V-type sodium ATPase subunit E (ntpE).